The primary structure comprises 596 residues: Selenocysteine-specific elongation factor (596 aa).

Residues 5 to 217 (RVNVNVGVLG…LLTSQISIPT (213 aa)) enclose the tr-type G domain. The G1 stretch occupies residues 14-21 (GHIDSGKT). Residues G19, T21, and A22 each coordinate GDP. G19, T21, and A22 together coordinate GTP. T21 is a binding site for Mg(2+). The interval 46-50 (GITLD) is G2. Residues T48 and D92 each coordinate Mg(2+). The tract at residues 92-95 (DCPG) is G3. Residues 146 to 149 (NKID) form a G4 region. GDP is bound by residues D149 and K187. Residues D149 and K187 each coordinate GTP. The G5 stretch occupies residues 185 to 187 (AAK). S537 carries the post-translational modification Phosphoserine. T545 carries the post-translational modification Phosphothreonine. Positions 547-553 (ALKKRAR) match the Nuclear localization signal motif. Residues 548–573 (LKKRARAGRGEATRQEESAERSEPSQ) form a disordered region. The segment covering 555–571 (GRGEATRQEESAERSEP) has biased composition (basic and acidic residues). Position 556 is an omega-N-methylarginine (R556).

Belongs to the TRAFAC class translation factor GTPase superfamily. Classic translation factor GTPase family. SelB subfamily. Mg(2+) serves as cofactor. Mn(2+) is required as a cofactor.

It localises to the cytoplasm. Its subcellular location is the nucleus. The catalysed reaction is GTP + H2O = GDP + phosphate + H(+). Functionally, translation factor required for the incorporation of the rare amino acid selenocysteine encoded by UGA codons. Replaces the eRF1-eRF3-GTP ternary complex for the insertion of selenocysteine directed by the UGA codon. Insertion of selenocysteine at UGA codons is mediated by SECISBP2 and EEFSEC: SECISBP2 (1) specifically binds the SECIS sequence once the 80S ribosome encounters an in-frame UGA codon and (2) contacts the RPS27A/eS31 of the 40S ribosome before ribosome stalling. (3) GTP-bound EEFSEC then delivers selenocysteinyl-tRNA(Sec) to the 80S ribosome and adopts a preaccommodated state conformation. (4) After GTP hydrolysis, EEFSEC dissociates from the assembly, selenocysteinyl-tRNA(Sec) accommodates, and peptide bond synthesis and selenoprotein elongation occur. In Homo sapiens (Human), this protein is Selenocysteine-specific elongation factor.